Here is a 430-residue protein sequence, read N- to C-terminus: SH3 domain-containing protein PJ696.02 (430 aa).

Residues 237–372 (EPEDIWGPSS…KPKFKQDSLG (136 aa)) form a disordered region. A compositionally biased stretch (basic and acidic residues) spans 263–277 (RRGDSYRSNRSRAHD). At Ser-285 the chain carries Phosphoserine. Residues 304-313 (SKMDNRRSKY) are compositionally biased toward basic and acidic residues. Residue Thr-316 is modified to Phosphothreonine. 2 positions are modified to phosphoserine: Ser-318 and Ser-324. Position 325 is a phosphotyrosine (Tyr-325). Ser-326, Ser-354, and Ser-406 each carry phosphoserine. A compositionally biased stretch (low complexity) spans 333 to 358 (VYSSDVSTESSSQFSSRSSEYSKPSR). Residues 371–430 (LGPNQARAMYSFAGEQPGDLSFQKGDIIDIVERSGSHDDWWTGRIGYREGIFPANYVKLS) form the SH3 domain.

Belongs to the SH3YL1 family.

The chain is SH3 domain-containing protein PJ696.02 from Schizosaccharomyces pombe (strain 972 / ATCC 24843) (Fission yeast).